We begin with the raw amino-acid sequence, 744 residues long: FNIP repeat-containing protein cigB (744 aa).

9 FNIP repeats span residues 340–376, 383–422, 426–462, 469–508, 512–550, 555–594, 598–635, 641–678, and 684–723; these read FNQK…TVTT, FNQK…TVIL, FNQK…TVTR, FNQK…TITL, FNQK…TTVR, FNQK…VTTV, and FNQK…NVYI.

The protein is FNIP repeat-containing protein cigB (cigB) of Dictyostelium discoideum (Social amoeba).